A 113-amino-acid polypeptide reads, in one-letter code: Type III endosome membrane protein TEMP (113 aa).

Residues 1–22 (MNETNKTLVGPSELPTASAVAP) form a disordered region. Residues 1–29 (MNETNKTLVGPSELPTASAVAPGPGTGAR) lie on the Extracellular side of the membrane. Asn-5 carries N-linked (GlcNAc...) asparagine glycosylation. Residues 30–50 (AWPVLVGFVLGAVVLSLLIAL) traverse the membrane as a helical; Signal-anchor for type III membrane protein segment. Residues 51-113 (AAKCHLCRRY…TEGSRDHFSL (63 aa)) are Cytoplasmic-facing. A disordered region spans residues 66 to 113 (HRPLPETGRGGRPQVAEDEDDDGFIEDNYIQPGTGELGTEGSRDHFSL). The segment covering 81 to 90 (AEDEDDDGFI) has biased composition (acidic residues).

It is found in the membrane. Its subcellular location is the early endosome. The protein localises to the recycling endosome. It localises to the cell membrane. May be involved in membrane trafficking between endosomes and plasma membrane. This is Type III endosome membrane protein TEMP (C1orf210) from Homo sapiens (Human).